A 230-amino-acid polypeptide reads, in one-letter code: Interleukin-6 (230 aa).

A signal peptide spans 1 to 24 (MASKHNADLSSAAMLAALLLCALG). Cys-96 and Cys-106 form a disulfide bridge. An N-linked (GlcNAc...) asparagine glycan is attached at Asn-100. Over residues 206–218 (REMPKQKRRKDDG) the composition is skewed to basic and acidic residues. The tract at residues 206-230 (REMPKQKRRKDDGIIPPIHPSYQMT) is disordered.

The protein belongs to the IL-6 superfamily. As to quaternary structure, component of a hexamer of two molecules each of IL6, IL6R and IL6ST; first binds to IL6R to associate with the signaling subunit IL6ST. As to expression, expressed in kidney and spleen. Low expression in liver and gills.

The protein resides in the secreted. Cytokine with a wide variety of biological functions in immunity, tissue regeneration, and metabolism. Binds to IL6R, then the complex associates to the signaling subunit IL6ST/gp130 to trigger the intracellular IL6-signaling pathway. The interaction with the membrane-bound IL6R and IL6ST stimulates 'classic signaling', whereas the binding of IL6 and soluble IL6R to IL6ST stimulates 'trans-signaling'. Alternatively, 'cluster signaling' occurs when membrane-bound IL6:IL6R complexes on transmitter cells activate IL6ST receptors on neighboring receiver cells. The sequence is that of Interleukin-6 (il6) from Paralichthys olivaceus (Bastard halibut).